The following is a 588-amino-acid chain: Histone deacetylase 9 (588 aa).

Phosphoserine is present on Ser22. Positions 23 to 27 (PLDLR) are interaction with CTBP1. Positions 110 to 147 (RQEQEVERHRREQQLPPLRGKDRGRERAVASTEVKQKL) are enriched in basic and acidic residues. Disordered regions lie at residues 110–170 (RQEQ…HSVG), 183–242 (TSLD…SSPL), and 264–301 (SSVS…PHPE). The interval 136–154 (RAVASTEVKQKLQEFLLSK) is interaction with MEF2. 2 stretches are compositionally biased toward polar residues: residues 154 to 166 (KSAT…NGKN) and 185 to 199 (LDQS…SPSY). Residues 175-343 (LWYTAAHHTS…LPAVPSPLNA (169 aa)) form an interaction with MAPK10 region. Over residues 208–219 (DSKDDFPLRKTA) the composition is skewed to basic and acidic residues. The interaction with ETV6 stretch occupies residues 218-261 (TASEPNLKVRSRLKQKVAERRSSPLLRRKDGNLVTSFKKRVFEV). Position 220 is a phosphoserine (Ser220). Residues 233–242 (KVAERRSSPL) are compositionally biased toward basic and acidic residues. A Phosphoserine; by DYRK1B modification is found at Ser240. Positions 264–284 (SSVSSSSPGSGPSSPNNGPAG) are enriched in low complexity. Ser450 is modified (phosphoserine). A disordered region spans residues 493-533 (QLKQPGSHLEEAEEELQGDQSMEDRAASKDNSARSDSSACV). The span at 514–525 (MEDRAASKDNSA) shows a compositional bias: basic and acidic residues. Ser552 is modified (phosphoserine).

It belongs to the histone deacetylase family. HD type 2 subfamily. As to quaternary structure, homodimer. Interacts with ETV6. Interacts with MEF2, HDAC1, HDAC3, HDAC4, HDAC5, CTBP1 and MAPK10. The phosphorylated form interacts with 14-3-3. Interacts with FOXP3 in the absence of T-cell stimulation. In terms of processing, sumoylated. Phosphorylated on Ser-220 and Ser-450; which promotes 14-3-3-binding, impairs interaction with MEF2, and antagonizes antimyogenic activity. Phosphorylated on Ser-240 by DYRK1B; which impairs nuclear accumulation. Phosphorylated by the PKC kinases PKN1 and PKN2, impairing nuclear import. Expressed at high levels in heart, brain and spleen. Expressed in skeletal muscle.

Its subcellular location is the nucleus. The catalysed reaction is N(6)-acetyl-L-lysyl-[histone] + H2O = L-lysyl-[histone] + acetate. In terms of biological role, devoided of intrinsic deacetylase activity, promotes the deacetylation of lysine residues on the N-terminal part of the core histones (H2A, H2B, H3 and H4) by recruiting HDAC1 and HDAC3. Histone deacetylation gives a tag for epigenetic repression and plays an important role in transcriptional regulation, cell cycle progression and developmental events. Represses MEF2-dependent transcription, inhibits skeletal myogenesis and may be involved in heart development. Protects neurons from apoptosis, both by inhibiting JUN phosphorylation by MAPK10 and by repressing JUN transcription via HDAC1 recruitment to JUN promoter. The protein is Histone deacetylase 9 (Hdac9) of Mus musculus (Mouse).